The sequence spans 496 residues: Glutathione reductase, cytosolic (496 aa).

Residues S32, G33, E52, T69, C70, and K78 each contribute to the FAD site. Position 32 (S32) interacts with glutathione. C70 and C75 are joined by a disulfide. Glutathione is bound at residue Y127. G143 contacts FAD. Residues G208, I211, E214, R231, R237, and G294 each contribute to the NADP(+) site. Residues D335 and T343 each coordinate FAD. A373 is a binding site for NADP(+). H469 contributes to the FAD binding site. H469 acts as the Proton acceptor in catalysis.

The protein belongs to the class-I pyridine nucleotide-disulfide oxidoreductase family. In terms of assembly, homodimer. It depends on FAD as a cofactor.

It is found in the cytoplasm. The catalysed reaction is 2 glutathione + NADP(+) = glutathione disulfide + NADPH + H(+). In terms of biological role, catalyzes the reduction of glutathione disulfide (GSSG) to reduced glutathione (GSH). Constitutes the major mechanism to maintain a high GSH:GSSG ratio in the cytosol. This chain is Glutathione reductase, cytosolic (GRC2), found in Oryza sativa subsp. japonica (Rice).